We begin with the raw amino-acid sequence, 366 residues long: Fructose-bisphosphate aldolase 1 (366 aa).

Residues Arg-56 and Lys-147 each contribute to the substrate site. Glu-189 functions as the Proton acceptor in the catalytic mechanism. Lys-231 acts as the Schiff-base intermediate with dihydroxyacetone-P in catalysis.

This sequence belongs to the class I fructose-bisphosphate aldolase family. Ubiquitous.

The catalysed reaction is beta-D-fructose 1,6-bisphosphate = D-glyceraldehyde 3-phosphate + dihydroxyacetone phosphate. It functions in the pathway carbohydrate degradation; glycolysis; D-glyceraldehyde 3-phosphate and glycerone phosphate from D-glucose: step 4/4. Functionally, may be involved in the metabolism of fructose-bisphosphate (beta-D-fructose 1,6-bisphosphate) and of fructose 1-phosphate. The chain is Fructose-bisphosphate aldolase 1 (aldo-1) from Caenorhabditis elegans.